Here is a 624-residue protein sequence, read N- to C-terminus: Probable potassium transport system protein Kup 1 (624 aa).

The next 12 helical transmembrane spans lie at 10-30 (LALG…LYAL), 48-68 (LSLI…MIIF), 94-114 (PVFY…GMLT), 133-153 (LYPY…SLQA), 159-179 (IGYL…ILGI), 210-230 (FLLG…ADIG), 242-262 (FFIA…NLIV), 270-290 (PFFM…ATVA), 331-351 (IYVP…CLAF), 363-383 (IAVN…AVSI), 388-408 (TFNV…FLGA), and 413-433 (FITG…IMYS).

Belongs to the HAK/KUP transporter (TC 2.A.72) family.

It is found in the cell inner membrane. The enzyme catalyses K(+)(in) + H(+)(in) = K(+)(out) + H(+)(out). Transport of potassium into the cell. Likely operates as a K(+):H(+) symporter. In Legionella pneumophila (strain Paris), this protein is Probable potassium transport system protein Kup 1.